The chain runs to 521 residues: Phomenoic acid biosynthesis cluster-specific transcriptional regulator (521 aa).

The segment at residues 46–76 (HCWQCRRSCVVCDFTQPGCQRCSAAGVSCPG) is a DNA-binding region (zn(2)-C6 fungal-type).

The protein localises to the nucleus. Its function is as follows. Transcriptional regulator; part of the gene cluster that mediates the biosynthesis of phomenoic acid, a long chain aliphatic carboxylic acid that does not appear to be essential for pathogenicity but may play a role in allowing to outcompete other fungi in the environmental niche via its antifungal properties. Positively regulates the expression of the cluster and subsequent production of phomenoic acid. The sequence is that of Phomenoic acid biosynthesis cluster-specific transcriptional regulator from Leptosphaeria maculans (strain JN3 / isolate v23.1.3 / race Av1-4-5-6-7-8) (Blackleg fungus).